Consider the following 123-residue polypeptide: Ribonuclease P protein component (123 aa).

The protein belongs to the RnpA family. Consists of a catalytic RNA component (M1 or rnpB) and a protein subunit.

The enzyme catalyses Endonucleolytic cleavage of RNA, removing 5'-extranucleotides from tRNA precursor.. Its function is as follows. RNaseP catalyzes the removal of the 5'-leader sequence from pre-tRNA to produce the mature 5'-terminus. It can also cleave other RNA substrates such as 4.5S RNA. The protein component plays an auxiliary but essential role in vivo by binding to the 5'-leader sequence and broadening the substrate specificity of the ribozyme. The chain is Ribonuclease P protein component from Herpetosiphon aurantiacus (strain ATCC 23779 / DSM 785 / 114-95).